Consider the following 146-residue polypeptide: Large ribosomal subunit protein uL15 (146 aa).

Residues 1–51 (MKLHELKPAKGSRKVRNRVGRGTSSGNGKTSGRGQKGQKARSGGGVRLGFE) are disordered. Residues 10–19 (KGSRKVRNRV) show a composition bias toward basic residues. 2 stretches are compositionally biased toward gly residues: residues 23-35 (TSSGNGKTSGRGQ) and 42-51 (SGGGVRLGFE).

The protein belongs to the universal ribosomal protein uL15 family. Part of the 50S ribosomal subunit.

Functionally, binds to the 23S rRNA. This Streptococcus equi subsp. equi (strain 4047) protein is Large ribosomal subunit protein uL15.